Here is a 276-residue protein sequence, read N- to C-terminus: E3 ubiquitin-protein ligase CCNB1IP1 (276 aa).

The RING-type; atypical zinc-finger motif lies at 10–52; it reads CNYRKCRIKLSGYAWVTACSHIFCDQHGSGEFSRSPAICPACN. Residues 146 to 182 adopt a coiled-coil conformation; that stretch reads MKKVLEEYKKKFSDISEKLMERNRQYQKLQGLYDSLR.

As to quaternary structure, interacts with CCNB1, UBE2L3 and NF2. Post-translationally, ubiquitinated; autoubiquitinated. Phosphorylated by CDK1 on serine or threonine residues (in vitro). As to expression, expressed predominantly in the testes and 17 day embryos (corresponding to prophase I in females). Weakly or not expressed in other tissues.

The protein resides in the nucleus. The protein localises to the chromosome. It catalyses the reaction S-ubiquitinyl-[E2 ubiquitin-conjugating enzyme]-L-cysteine + [acceptor protein]-L-lysine = [E2 ubiquitin-conjugating enzyme]-L-cysteine + N(6)-ubiquitinyl-[acceptor protein]-L-lysine.. Its pathway is protein modification; protein ubiquitination. Ubiquitin E3 ligase that acts as a limiting factor for crossing-over during meiosis: required during zygonema to limit the colocalization of RNF212 with MutS-gamma-associated recombination sites and thereby establish early differentiation of crossover and non-crossover sites. Later, it is directed by MutL-gamma to stably accumulate at designated crossover sites. Probably promotes the dissociation of RNF212 and MutS-gamma to allow the progression of recombination and the implementation of the final steps of crossing over. Modulates cyclin-B levels and participates in the regulation of cell cycle progression through the G2 phase. Overexpression causes delayed entry into mitosis. The sequence is that of E3 ubiquitin-protein ligase CCNB1IP1 (Ccnb1ip1) from Mus musculus (Mouse).